The sequence spans 99 residues: Small ribosomal subunit protein uS19 (99 aa).

This sequence belongs to the universal ribosomal protein uS19 family.

Its function is as follows. Protein S19 forms a complex with S13 that binds strongly to the 16S ribosomal RNA. The sequence is that of Small ribosomal subunit protein uS19 from Sulfurihydrogenibium sp. (strain YO3AOP1).